We begin with the raw amino-acid sequence, 538 residues long: Cytochrome P450 monooxygenase verH (538 aa).

The helical transmembrane segment at 2-21 (VFAMLVVCWSIFLGLWMLVS) threads the bilayer. Cysteine 445 is a binding site for heme.

This sequence belongs to the cytochrome P450 family. It depends on heme as a cofactor.

The protein resides in the membrane. It participates in secondary metabolite biosynthesis; terpenoid biosynthesis. Its pathway is mycotoxin biosynthesis. Cytochrome P450 monooxygenase; part of the gene cluster that mediates the biosynthesis of the neurotoxin verrucosidin, a methylated alpha-pyrone polyketide that inhibits oxidative phosphorylation in mitochondria and thereby causes neurological diseases. The carbon backbone of verrucosidin is synthesized by the HR-PKS verA, and further modified by the other verrucodidin cluster enzymes. The chain is Cytochrome P450 monooxygenase verH from Penicillium polonicum.